The sequence spans 372 residues: NAD(P)H-quinone oxidoreductase subunit 1 (372 aa).

The next 8 membrane-spanning stretches (helical) occupy residues 27–47 (IIWL…GVLV), 97–117 (ILFT…WLIV), 128–148 (VGIG…GLLM), 176–196 (LALS…IDIV), 204–224 (ILSW…ICAL), 266–286 (ILSA…PIPV), 308–328 (SIGI…AILL), and 347–367 (FLLP…LAFP).

The protein belongs to the complex I subunit 1 family. In terms of assembly, NDH-1 is composed of at least 11 different subunits.

The protein localises to the cellular thylakoid membrane. It catalyses the reaction a plastoquinone + NADH + (n+1) H(+)(in) = a plastoquinol + NAD(+) + n H(+)(out). The enzyme catalyses a plastoquinone + NADPH + (n+1) H(+)(in) = a plastoquinol + NADP(+) + n H(+)(out). In terms of biological role, NDH-1 shuttles electrons from an unknown electron donor, via FMN and iron-sulfur (Fe-S) centers, to quinones in the respiratory and/or the photosynthetic chain. The immediate electron acceptor for the enzyme in this species is believed to be plastoquinone. Couples the redox reaction to proton translocation, and thus conserves the redox energy in a proton gradient. The polypeptide is NAD(P)H-quinone oxidoreductase subunit 1 (Prochlorococcus marinus (strain MIT 9312)).